A 291-amino-acid polypeptide reads, in one-letter code: Protein US2 (291 aa).

The residue at position 2 (G2) is an N-acetylglycine; by host; partial. The tract at residues 251 to 270 (PEVPDEQPTSPGRGPQETDP) is disordered.

Belongs to the herpesviridae HHV-1 US2 protein family. In terms of assembly, interacts with host KRT18.

The protein localises to the host cytoplasm. It is found in the host nucleus. In Homo sapiens (Human), this protein is Protein US2.